A 197-amino-acid chain; its full sequence is LexA repressor (197 aa).

The H-T-H motif DNA-binding region spans 28 to 47 (VREIARRFRITPRGALLHLI). Catalysis depends on for autocatalytic cleavage activity residues serine 119 and lysine 156.

Belongs to the peptidase S24 family. As to quaternary structure, homodimer.

It carries out the reaction Hydrolysis of Ala-|-Gly bond in repressor LexA.. In terms of biological role, represses a number of genes involved in the response to DNA damage (SOS response), including recA and lexA. In the presence of single-stranded DNA, RecA interacts with LexA causing an autocatalytic cleavage which disrupts the DNA-binding part of LexA, leading to derepression of the SOS regulon and eventually DNA repair. The protein is LexA repressor of Thermotoga maritima (strain ATCC 43589 / DSM 3109 / JCM 10099 / NBRC 100826 / MSB8).